The chain runs to 320 residues: MSKKISLKIGILMDSIESINIKKDSSFAILLEAQKRNHIIHYMEMNDLYLRKEQAFARTRLIKLIKNTQKWYQFIKQQSISLSELDVILMRKDPPFNTEFIYSTYILERAEETGVLIINKPKSLRDCNEKIFTSWFPDLITDTLVTRNIFQIRQFWEKYQDIIIKPLDAMGGANIFRIKKNDPNFSVIVENMTNYERKYCMVQNYLPEIKLGDKRILIINGKPIPWCVARIARIGETRANLAAGGEGKIQSLSETDWKIANYLSPTLKKRGLILVGLDVIGDKLTEINVTSPTCICEIESQKNISITGMLLDYIEKKVCL.

The region spanning Lys-130–Glu-315 is the ATP-grasp domain. Trp-156–Gly-212 is an ATP binding site. Mg(2+)-binding residues include Glu-286 and Asn-288.

Belongs to the prokaryotic GSH synthase family. The cofactor is Mg(2+). Requires Mn(2+) as cofactor.

It carries out the reaction gamma-L-glutamyl-L-cysteine + glycine + ATP = glutathione + ADP + phosphate + H(+). It participates in sulfur metabolism; glutathione biosynthesis; glutathione from L-cysteine and L-glutamate: step 2/2. The polypeptide is Glutathione synthetase (Buchnera aphidicola subsp. Acyrthosiphon pisum (strain APS) (Acyrthosiphon pisum symbiotic bacterium)).